Reading from the N-terminus, the 332-residue chain is MTLLNPNIPIRQEVKVRFDWSLEEIQEILEKPLFELLWEAQNVHRSVNPEYKVQLASLLSVKTGGCEEDCSYCSQSIYNSSDVTNQSDFDVKGVLEQAKAAKAAGADRFCMGWAWREIRDGKPFEAMLDMVRGVKELGLEACVTGGMLTNQQAARLAEVGLNAYNHNLDTSPEHYDKIISTRTYQDRLETLHRVRNAGITICCGGIIGMGETLKDRASLLRVLANMDPHPESVPINALVPVEGTPLENLSMVDPLEMVRMVATARILMPRSRVRLSAGREQLGKEAQILCLLAGADSIFYGDTLLTTSNPSIKADRELLASAGVSVNWDLYD.

One can recognise a Radical SAM core domain in the interval 51-279; that stretch reads YKVQLASLLS…RSRVRLSAGR (229 aa). [4Fe-4S] cluster contacts are provided by cysteine 66, cysteine 70, and cysteine 73. Positions 110, 142, 202, and 274 each coordinate [2Fe-2S] cluster.

This sequence belongs to the radical SAM superfamily. Biotin synthase family. As to quaternary structure, homodimer. [4Fe-4S] cluster is required as a cofactor. [2Fe-2S] cluster serves as cofactor.

It carries out the reaction (4R,5S)-dethiobiotin + (sulfur carrier)-SH + 2 reduced [2Fe-2S]-[ferredoxin] + 2 S-adenosyl-L-methionine = (sulfur carrier)-H + biotin + 2 5'-deoxyadenosine + 2 L-methionine + 2 oxidized [2Fe-2S]-[ferredoxin]. It functions in the pathway cofactor biosynthesis; biotin biosynthesis; biotin from 7,8-diaminononanoate: step 2/2. Its function is as follows. Catalyzes the conversion of dethiobiotin (DTB) to biotin by the insertion of a sulfur atom into dethiobiotin via a radical-based mechanism. This chain is Biotin synthase, found in Prochlorococcus marinus (strain SARG / CCMP1375 / SS120).